The chain runs to 454 residues: Inner membrane transport protein YajR (454 aa).

At 1 to 14 (MNDYKMTPGERRAT) the chain is on the periplasmic side. A helical transmembrane segment spans residues 15–35 (WGLGTVFSLRMLGMFMVLPVL). Over 36–47 (TTYGMALQGASE) the chain is Cytoplasmic. Residues 48–68 (ALIGIAIGIYGLTQAVFQIPF) traverse the membrane as a helical segment. Topologically, residues 69–84 (GLLSDRIGRKPLIVGG) are periplasmic. Residues 85 to 105 (LAVFAAGSVIAALSDSIWGII) traverse the membrane as a helical segment. Over 106–137 (LGRALQGSGAIAAAVMALLSDLTREQNRTKAM) the chain is Cytoplasmic. Residues 138 to 158 (AFIGVSFGITFAIAMVLGPII) traverse the membrane as a helical segment. The Periplasmic segment spans residues 159 to 165 (THKLGLH). The chain crosses the membrane as a helical span at residues 166 to 186 (ALFWMIAILATTGIALTIWVV). Over 187–216 (PNSSTHVLNRESGMVKGSFSKVLAEPRLLK) the chain is Cytoplasmic. A helical membrane pass occupies residues 217–237 (LNFGIMCLHILLMSTFVALPG). Topologically, residues 238–252 (QLADAGFPAAEHWKV) are periplasmic. A helical membrane pass occupies residues 253-273 (YLATMLIAFGSVVPFIIYAEV). Residues 274–279 (KRKMKQ) are Cytoplasmic-facing. A helical membrane pass occupies residues 280–300 (VFVFCVGLIVVAEIVLWNAQT). Topologically, residues 301-306 (QFWQLV) are periplasmic. The helical transmembrane segment at 307–327 (VGVQLFFVAFNLMEALLPSLI) threads the bilayer. Residues 328–340 (SKESPAGYKGTAM) lie on the Cytoplasmic side of the membrane. Residues 341 to 361 (GVYSTSQFLGVAIGGSLGGWI) form a helical membrane-spanning segment. The Periplasmic segment spans residues 362–363 (NG). The chain crosses the membrane as a helical span at residues 364-384 (MFDGQGVFLAGAMLAAVWLTV). Topologically, residues 385 to 454 (ASTMKEPPYV…FEIEQAIRQA (70 aa)) are cytoplasmic.

Belongs to the major facilitator superfamily.

The protein localises to the cell inner membrane. This is Inner membrane transport protein YajR (yajR) from Escherichia coli (strain K12).